The primary structure comprises 273 residues: Ribosomal RNA small subunit methyltransferase A (273 aa).

S-adenosyl-L-methionine-binding residues include Asn-18, Leu-20, Gly-45, Glu-66, Asp-91, and Asn-113.

Belongs to the class I-like SAM-binding methyltransferase superfamily. rRNA adenine N(6)-methyltransferase family. RsmA subfamily.

The protein resides in the cytoplasm. It catalyses the reaction adenosine(1518)/adenosine(1519) in 16S rRNA + 4 S-adenosyl-L-methionine = N(6)-dimethyladenosine(1518)/N(6)-dimethyladenosine(1519) in 16S rRNA + 4 S-adenosyl-L-homocysteine + 4 H(+). In terms of biological role, specifically dimethylates two adjacent adenosines (A1518 and A1519) in the loop of a conserved hairpin near the 3'-end of 16S rRNA in the 30S particle. May play a critical role in biogenesis of 30S subunits. The sequence is that of Ribosomal RNA small subunit methyltransferase A from Klebsiella pneumoniae (strain 342).